The sequence spans 180 residues: UPF0227 protein ECA1814 (180 aa).

Belongs to the UPF0227 family.

The protein is UPF0227 protein ECA1814 of Pectobacterium atrosepticum (strain SCRI 1043 / ATCC BAA-672) (Erwinia carotovora subsp. atroseptica).